A 117-amino-acid polypeptide reads, in one-letter code: Large ribosomal subunit protein uL22 (117 aa).

It belongs to the universal ribosomal protein uL22 family. As to quaternary structure, part of the 50S ribosomal subunit.

This protein binds specifically to 23S rRNA; its binding is stimulated by other ribosomal proteins, e.g. L4, L17, and L20. It is important during the early stages of 50S assembly. It makes multiple contacts with different domains of the 23S rRNA in the assembled 50S subunit and ribosome. Its function is as follows. The globular domain of the protein is located near the polypeptide exit tunnel on the outside of the subunit, while an extended beta-hairpin is found that lines the wall of the exit tunnel in the center of the 70S ribosome. This is Large ribosomal subunit protein uL22 from Latilactobacillus sakei subsp. sakei (strain 23K) (Lactobacillus sakei subsp. sakei).